The chain runs to 281 residues: Imidazoleglycerol-phosphate dehydratase, chloroplastic (281 aa).

Residues 1–85 (MELYAASHSL…TSLPFHPETR (85 aa)) constitute a chloroplast transit peptide. Substrate contacts are provided by residues E95, 121 to 129 (HMLDQLASH), 147 to 151 (HHTNE), R173, and R195. Mn(2+) is bound by residues H121, H147, H148, and E151. Mn(2+) contacts are provided by H219, H243, H244, and E247. Residues 243–251 (HHIIEATFK) and 273–275 (SSK) each bind substrate.

This sequence belongs to the imidazoleglycerol-phosphate dehydratase family. The cofactor is Mn(2+).

The protein localises to the plastid. The protein resides in the chloroplast. It catalyses the reaction D-erythro-1-(imidazol-4-yl)glycerol 3-phosphate = 3-(imidazol-4-yl)-2-oxopropyl phosphate + H2O. The protein operates within amino-acid biosynthesis; L-histidine biosynthesis; L-histidine from 5-phospho-alpha-D-ribose 1-diphosphate: step 6/9. This Pisum sativum (Garden pea) protein is Imidazoleglycerol-phosphate dehydratase, chloroplastic.